The primary structure comprises 600 residues: Chaperone protein DnaK (600 aa).

A Phosphothreonine; by autocatalysis modification is found at Thr-175. A compositionally biased stretch (low complexity) spans 569–578 (SFAQATAQQA). Positions 569–600 (SFAQATAQQANTSESDPKADDSNTIDAEIKQD) are disordered. The segment covering 583-600 (SDPKADDSNTIDAEIKQD) has biased composition (basic and acidic residues).

Belongs to the heat shock protein 70 family.

Functionally, acts as a chaperone. The polypeptide is Chaperone protein DnaK (Mesomycoplasma hyopneumoniae (strain 7448) (Mycoplasma hyopneumoniae)).